The sequence spans 152 residues: UPF0178 protein YE1167 (152 aa).

The protein belongs to the UPF0178 family.

The chain is UPF0178 protein YE1167 from Yersinia enterocolitica serotype O:8 / biotype 1B (strain NCTC 13174 / 8081).